Reading from the N-terminus, the 474-residue chain is Melanopsin (474 aa).

Over 1 to 72 the chain is Extracellular; the sequence is MNSPSESRVP…VDVPDHAHYT (72 aa). N-linked (GlcNAc...) asparagine glycosylation is found at Asn31 and Asn35. A helical membrane pass occupies residues 73-93; the sequence is LGTVILLVGLTGMLGNLTVIY. The Cytoplasmic portion of the chain corresponds to 94–107; the sequence is TFCRNRGLRTPANM. Residues 108–128 traverse the membrane as a helical segment; the sequence is LIINLAVSDFLMSFTQAPVFF. Residues 129–144 are Extracellular-facing; it reads ASSLYKKWLFGETGCK. Cys143 and Cys221 are oxidised to a cystine. A helical membrane pass occupies residues 145 to 165; it reads FYAFCGAVFGIVSMITLTAIA. Topologically, residues 166 to 188 are cytoplasmic; that stretch reads MDRYLVITRPLATIGMRSKRRTA. A helical membrane pass occupies residues 189–209; it reads LVLLGVWLYALAWSLPPFFGW. The Extracellular portion of the chain corresponds to 210 to 238; the sequence is SAYVPEGLLTSCSWDYVTFTPLVRAYTML. The helical transmembrane segment at 239 to 259 threads the bilayer; it reads LFCFVFFLPLLIIIFCYIFIF. The Cytoplasmic portion of the chain corresponds to 260–293; it reads RAIRETGRACEGCGESPLRRRQWQRLQSEWKMAK. Residues 294–314 form a helical membrane-spanning segment; that stretch reads VALIVILLFVLSWAPYSTVAL. The Extracellular portion of the chain corresponds to 315–355; that stretch reads VGFAGYSHILTPYMSSVPAVIAKASAIHNPIIYAITHPKYR. At Lys337 the chain carries N6-(retinylidene)lysine. Residues 356–372 form a helical membrane-spanning segment; that stretch reads AAIAQHLPCLGVLLGVS. At 373-474 the chain is on the cytoplasmic side; sequence GQRSHPSLSY…RHLPSLDRRM (102 aa). A disordered region spans residues 428–474; it reads AAQQASGQSFCSHDLEDGEVKAPSSPQEQKSKTPKTKRHLPSLDRRM.

It belongs to the G-protein coupled receptor 1 family. Opsin subfamily. Eye; expressed in a photosensitive subset of retinal ganglion cells (at protein level).

Its subcellular location is the cell membrane. The protein localises to the cell projection. It is found in the axon. The protein resides in the dendrite. It localises to the perikaryon. Its function is as follows. Photoreceptor that binds cis-retinaldehydes. Contributes to pupillar reflex, photoentrainment and other non-image forming responses to light. May be involved in the optokinetic visual tracking response. May be involved in the regulation of retinal hyaloid vessel growth and regression. The protein is Melanopsin of Rattus norvegicus (Rat).